Here is a 240-residue protein sequence, read N- to C-terminus: Enoyl-CoA delta isomerase 1, peroxisomal (240 aa).

A Microbody targeting signal motif is present at residues serine 238–leucine 240.

The protein belongs to the enoyl-CoA hydratase/isomerase family.

The protein localises to the peroxisome. It carries out the reaction a (3Z)-enoyl-CoA = a 4-saturated (2E)-enoyl-CoA. The catalysed reaction is a (3E)-enoyl-CoA = a 4-saturated (2E)-enoyl-CoA. It functions in the pathway lipid metabolism; fatty acid beta-oxidation. Able to isomerize both 3-cis and 3-trans double bonds into the 2-trans form in a range of enoyl-CoA species. Essential for the beta oxidation of unsaturated fatty acids. This Arabidopsis thaliana (Mouse-ear cress) protein is Enoyl-CoA delta isomerase 1, peroxisomal.